Consider the following 54-residue polypeptide: Califin-C (54 aa).

C25 and C53 are disulfide-bonded. L36 is subject to Leucine amide.

The protein belongs to the molluscan ELH family. As to quaternary structure, this protein consists of a large 36-residue subunit, bound by a single disulfide-bond to a small 18-residue subunit.

Its subcellular location is the secreted. Functionally, injected in sexually mature animals califin C excites LB and LC cells of the abdominal ganglion and cause egg-laying. The polypeptide is Califin-C (Aplysia californica (California sea hare)).